The primary structure comprises 201 residues: DNA polymerase epsilon subunit C (201 aa).

Disordered stretches follow at residues 102–165 (KKRE…KSTR) and 178–201 (SALD…STDP). The span at 117–144 (VVIEEPELHEDDGVEEEEEEDEVSEEEE) shows a compositional bias: acidic residues. 2 stretches are compositionally biased toward basic and acidic residues: residues 145–164 (PVHN…DKST) and 182–201 (VGEH…STDP). Residues Ser186, Ser188, and Ser189 each carry the phosphoserine modification.

As to quaternary structure, DNA polymerase epsilon is a heterotetramer consisting of POL2, DPB2, DPB3 and DPB4.

The protein resides in the nucleus. In terms of biological role, as accessory component of the DNA polymerase epsilon (DNA polymerase II) participates in chromosomal DNA replication. It is required during synthesis of the leading and lagging DNA strands at the replication fork and binds at/or near replication origins and moves along DNA with the replication fork. It has 3'-5' proofreading exonuclease activity that correct errors arising during DNA replication. It is also involved in DNA synthesis during DNA repair. This Saccharomyces cerevisiae (strain ATCC 204508 / S288c) (Baker's yeast) protein is DNA polymerase epsilon subunit C (DPB3).